A 215-amino-acid chain; its full sequence is Large ribosomal subunit protein uL3 (215 aa).

At glutamine 153 the chain carries N5-methylglutamine.

This sequence belongs to the universal ribosomal protein uL3 family. In terms of assembly, part of the 50S ribosomal subunit. Forms a cluster with proteins L14 and L19. In terms of processing, methylated by PrmB.

Functionally, one of the primary rRNA binding proteins, it binds directly near the 3'-end of the 23S rRNA, where it nucleates assembly of the 50S subunit. The sequence is that of Large ribosomal subunit protein uL3 from Nitrosococcus oceani (strain ATCC 19707 / BCRC 17464 / JCM 30415 / NCIMB 11848 / C-107).